The chain runs to 453 residues: MEQQIYLFGLNHKTAGVEVREAFALGERPKLGELLVDGEARVREALVLSTCNRVEVLVVDPVGRDPKAAVLAAWAGQCGQDPALLAPHLYAHQGMAAVDHLFCVASGLDSLVLGEPQILGQLKAAYRHAVASRTAGVIINRLCHKAFSVAKKVRTATGIGASAVSISYAAVELAKRIFGEMAGKKAMLVGAGEMAELAAMHLLTSGVSEILVANRTYARAEELAGRFKGRAVAFEEFVSRLHEVDIVISSTGAPHVVIRAKDVRAVLKARRHKPMFFIDIAVPRDIDPDINSLDNVYLYDIDDLQEVVEENLAQRREEAARARDIIGLQVERFGEWVKSLDVKPTIVDLLDVGASLARQELQKTLRRLGPEVPEETRAALETMALSISRKMLHEPIAFLKRRAKEEHGERFVDLTRRMYNLDREKVPTDAHADRKPPNFAETSDDFDVTDASE.

Substrate-binding positions include 50 to 53, Ser110, 115 to 117, and Gln121; these read TCNR and EPQ. The Nucleophile role is filled by Cys51. 190-195 serves as a coordination point for NADP(+); it reads GAGEMA. The span at 423 to 436 shows a compositional bias: basic and acidic residues; sequence REKVPTDAHADRKP. A disordered region spans residues 423–453; that stretch reads REKVPTDAHADRKPPNFAETSDDFDVTDASE. A compositionally biased stretch (acidic residues) spans 442–453; it reads TSDDFDVTDASE.

Belongs to the glutamyl-tRNA reductase family. Homodimer.

The catalysed reaction is (S)-4-amino-5-oxopentanoate + tRNA(Glu) + NADP(+) = L-glutamyl-tRNA(Glu) + NADPH + H(+). Its pathway is porphyrin-containing compound metabolism; protoporphyrin-IX biosynthesis; 5-aminolevulinate from L-glutamyl-tRNA(Glu): step 1/2. Its function is as follows. Catalyzes the NADPH-dependent reduction of glutamyl-tRNA(Glu) to glutamate 1-semialdehyde (GSA). The polypeptide is Glutamyl-tRNA reductase (Solidesulfovibrio magneticus (strain ATCC 700980 / DSM 13731 / RS-1) (Desulfovibrio magneticus)).